Reading from the N-terminus, the 318-residue chain is Electron transfer flavoprotein subunit alpha (318 aa).

An FAD-binding site is contributed by 257–285; that stretch reads LYIALGISGAIQHRAGMQTSKTIVAVNKD.

This sequence belongs to the ETF alpha-subunit/FixB family. In terms of assembly, heterodimer of an alpha and a beta subunit. Requires FAD as cofactor.

The electron transfer flavoprotein serves as a specific electron acceptor for other dehydrogenases. It transfers the electrons to the main respiratory chain via ETF-ubiquinone oxidoreductase (ETF dehydrogenase). The chain is Electron transfer flavoprotein subunit alpha (etfA) from Mycobacterium tuberculosis (strain CDC 1551 / Oshkosh).